Here is a 121-residue protein sequence, read N- to C-terminus: Holo-[acyl-carrier-protein] synthase (121 aa).

Residues D8 and E55 each coordinate Mg(2+).

Belongs to the P-Pant transferase superfamily. AcpS family. Mg(2+) serves as cofactor.

The protein resides in the cytoplasm. The enzyme catalyses apo-[ACP] + CoA = holo-[ACP] + adenosine 3',5'-bisphosphate + H(+). Functionally, transfers the 4'-phosphopantetheine moiety from coenzyme A to a Ser of acyl-carrier-protein. This is Holo-[acyl-carrier-protein] synthase from Caldicellulosiruptor bescii (strain ATCC BAA-1888 / DSM 6725 / KCTC 15123 / Z-1320) (Anaerocellum thermophilum).